Consider the following 107-residue polypeptide: Protein RnfH (107 aa).

Residues 82-107 (ARRKRAEKAKEEGRANKVTGGRPIER) are disordered.

This sequence belongs to the UPF0125 (RnfH) family.

In Pseudoalteromonas translucida (strain TAC 125), this protein is Protein RnfH.